We begin with the raw amino-acid sequence, 594 residues long: Elongation factor 4 (594 aa).

In terms of domain architecture, tr-type G spans 2–184; it reads KNIRNFSIIA…TIVAKVPAPE (183 aa). GTP is bound by residues 14 to 19 and 131 to 134; these read DHGKST and NKID.

This sequence belongs to the TRAFAC class translation factor GTPase superfamily. Classic translation factor GTPase family. LepA subfamily.

It localises to the cell inner membrane. It carries out the reaction GTP + H2O = GDP + phosphate + H(+). Its function is as follows. Required for accurate and efficient protein synthesis under certain stress conditions. May act as a fidelity factor of the translation reaction, by catalyzing a one-codon backward translocation of tRNAs on improperly translocated ribosomes. Back-translocation proceeds from a post-translocation (POST) complex to a pre-translocation (PRE) complex, thus giving elongation factor G a second chance to translocate the tRNAs correctly. Binds to ribosomes in a GTP-dependent manner. This chain is Elongation factor 4, found in Francisella tularensis subsp. tularensis (strain WY96-3418).